A 444-amino-acid chain; its full sequence is Tubulin beta chain (444 aa).

Positions 1-4 (MREI) match the MREI motif motif. GTP is bound by residues Gln-11, Glu-69, Ser-138, Gly-142, Thr-143, Gly-144, Asn-204, and Asn-226. Glu-69 serves as a coordination point for Mg(2+). The interval 421–444 (EYQQYQDATAEEEEDFNEEAEEEA) is disordered. The span at 429–444 (TAEEEEDFNEEAEEEA) shows a compositional bias: acidic residues. A 5-glutamyl polyglutamate modification is found at Glu-438.

The protein belongs to the tubulin family. Dimer of alpha and beta chains. A typical microtubule is a hollow water-filled tube with an outer diameter of 25 nm and an inner diameter of 15 nM. Alpha-beta heterodimers associate head-to-tail to form protofilaments running lengthwise along the microtubule wall with the beta-tubulin subunit facing the microtubule plus end conferring a structural polarity. Microtubules usually have 13 protofilaments but different protofilament numbers can be found in some organisms and specialized cells. Requires Mg(2+) as cofactor. Post-translationally, some glutamate residues at the C-terminus are polyglycylated, resulting in polyglycine chains on the gamma-carboxyl group. Glycylation is mainly limited to tubulin incorporated into axonemes (cilia and flagella) whereas glutamylation is prevalent in neuronal cells, centrioles, axonemes, and the mitotic spindle. Both modifications can coexist on the same protein on adjacent residues, and lowering polyglycylation levels increases polyglutamylation, and reciprocally. The precise function of polyglycylation is still unclear. Some glutamate residues at the C-terminus are polyglutamylated, resulting in polyglutamate chains on the gamma-carboxyl group. Polyglutamylation plays a key role in microtubule severing by spastin (SPAST). SPAST preferentially recognizes and acts on microtubules decorated with short polyglutamate tails: severing activity by SPAST increases as the number of glutamates per tubulin rises from one to eight, but decreases beyond this glutamylation threshold.

It localises to the cytoplasm. Its subcellular location is the cytoskeleton. Tubulin is the major constituent of microtubules, a cylinder consisting of laterally associated linear protofilaments composed of alpha- and beta-tubulin heterodimers. Microtubules grow by the addition of GTP-tubulin dimers to the microtubule end, where a stabilizing cap forms. Below the cap, tubulin dimers are in GDP-bound state, owing to GTPase activity of alpha-tubulin. This chain is Tubulin beta chain (tubb), found in Xenopus laevis (African clawed frog).